A 126-amino-acid chain; its full sequence is 5-hydroxyisourate hydrolase (126 aa).

H16, R54, and Y123 together coordinate substrate.

The protein belongs to the transthyretin family. 5-hydroxyisourate hydrolase subfamily. In terms of assembly, homotetramer.

It catalyses the reaction 5-hydroxyisourate + H2O = 5-hydroxy-2-oxo-4-ureido-2,5-dihydro-1H-imidazole-5-carboxylate + H(+). Its function is as follows. Catalyzes the hydrolysis of 5-hydroxyisourate (HIU) to 2-oxo-4-hydroxy-4-carboxy-5-ureidoimidazoline (OHCU). The polypeptide is 5-hydroxyisourate hydrolase (Pseudomonas aeruginosa (strain ATCC 15692 / DSM 22644 / CIP 104116 / JCM 14847 / LMG 12228 / 1C / PRS 101 / PAO1)).